Here is a 61-residue protein sequence, read N- to C-terminus: MHNILDPTFNGMPGSELYRAEVFPELFPHQPPMRLENWSQEDLELYVGGCFTPGYGERKSA.

In Mycobacterium phage L5 (Mycobacteriophage L5), this protein is Gene 52 protein (52).